Reading from the N-terminus, the 403-residue chain is Acetyl-CoA acetyltransferase IA (403 aa).

Cys91 serves as the catalytic Acyl-thioester intermediate. Active-site proton acceptor residues include His353 and Cys383. A Microbody targeting signal motif is present at residues 401-403; sequence AKL.

Belongs to the thiolase-like superfamily. Thiolase family. In terms of assembly, multimeric.

The protein resides in the peroxisome. It catalyses the reaction 2 acetyl-CoA = acetoacetyl-CoA + CoA. It participates in metabolic intermediate biosynthesis; (R)-mevalonate biosynthesis; (R)-mevalonate from acetyl-CoA: step 1/3. The protein is Acetyl-CoA acetyltransferase IA (PACTA) of Candida tropicalis (Yeast).